Consider the following 217-residue polypeptide: MTELNKYIDHTNLSPSATSKDIDKLIQEAIKYDFKSVCIAPSYVKYAKEALKNSDVLVCTVIGFPLGYNATSVKVYETKIAVEHGADEIDMVINVGRFKDGQYEYVLNEIKAIKEACNGKTLKVIVETALLTKAELIKITELVMQSGADFIKTSTGFSYRGASFEDIQTMKETCGDKLLIKASGGIKNLADAQEMIRLGANVWVCLNQFQLWKNYLN.

Asp90 (proton donor/acceptor) is an active-site residue. Lys152 (schiff-base intermediate with acetaldehyde) is an active-site residue. The active-site Proton donor/acceptor is Lys181.

This sequence belongs to the DeoC/FbaB aldolase family. DeoC type 1 subfamily.

The protein resides in the cytoplasm. It carries out the reaction 2-deoxy-D-ribose 5-phosphate = D-glyceraldehyde 3-phosphate + acetaldehyde. It functions in the pathway carbohydrate degradation; 2-deoxy-D-ribose 1-phosphate degradation; D-glyceraldehyde 3-phosphate and acetaldehyde from 2-deoxy-alpha-D-ribose 1-phosphate: step 2/2. Its function is as follows. Catalyzes a reversible aldol reaction between acetaldehyde and D-glyceraldehyde 3-phosphate to generate 2-deoxy-D-ribose 5-phosphate. In Metamycoplasma hominis (Mycoplasma hominis), this protein is Deoxyribose-phosphate aldolase.